A 1230-amino-acid chain; its full sequence is Potassium channel subfamily T member 1 (1230 aa).

Residues 1–37 (MARAKLPRSPSEGKAGPGGAPAGAAAPEEPHGLSPLL) are disordered. At 1–93 (MARAKLPRSP…LFFIKNQRSS (93 aa)) the chain is on the cytoplasmic side. A helical transmembrane segment spans residues 94–126 (LRIRLFNFSLKLLTCLLYIVRVLLDDPALGIGC). Residues 127 to 153 (WGCPKQNYSFNDSSSEINWAPILWVER) are Extracellular-facing. Residues Asn-133 and Asn-137 are each glycosylated (N-linked (GlcNAc...) asparagine). A helical transmembrane segment spans residues 154-178 (KMTLWAIQVIVAIISFLETMLLIYL). Residues 179–192 (SYKGNIWEQIFRVS) lie on the Cytoplasmic side of the membrane. A helical membrane pass occupies residues 193–208 (FVLEMINTLPFIITIF). The Extracellular segment spans residues 209 to 215 (WPPLRNL). A helical transmembrane segment spans residues 216–233 (FIPVFLNCWLAKHALENM). Over 234-246 (INDFHRAILRTQS) the chain is Cytoplasmic. Residues 247–274 (AMFNQVLILFCTLLCLVFTGTCGIQHLE) traverse the membrane as a helical segment. Over 275-281 (RAGENLS) the chain is Extracellular. The segment at residues 282-302 (LLTSFYFCIVTFSTVGYGDVT) is an intramembrane region (pore-forming). K(+) is bound by residues Val-296 and Gly-297. The Extracellular portion of the chain corresponds to 303–304 (PK). The helical transmembrane segment at 305-338 (IWPSQLLVVIMICVALVVLPLQFEELVYLWMERQ) threads the bilayer. Residues 339 to 1230 (KSGGNYSRHR…NPETRDETQL (892 aa)) lie on the Cytoplasmic side of the membrane. Residues 352–488 (EKHVVLCVSS…FHVKFADHVV (137 aa)) form the RCK N-terminal 1 domain. 4 residues coordinate Na(+): Leu-513, His-516, Ser-538, and Asn-540. Residues 660 to 689 (TEHRPTQSGGGGGGSKLALPTENGSGSRRP) are disordered. 2 residues coordinate Zn(2+): Cys-758 and Cys-759. K(+) contacts are provided by Arg-761 and Lys-764. The Na(+) site is built by Arg-761 and Lys-764. Residues Cys-766 and His-768 each contribute to the Zn(2+) site. K(+)-binding residues include Asn-769, Tyr-771, Tyr-777, and Gly-778. Tyr-771 contributes to the Na(+) binding site. A Na(+)-binding site is contributed by Phe-779. In terms of domain architecture, RCK N-terminal 2 spans 781–921 (NKLIIVSAET…QFRAKDSYSL (141 aa)). K(+) contacts are provided by Ser-787, Leu-818, Asp-820, Gly-842, and Asp-865. Disordered stretches follow at residues 1048 to 1078 (EVKG…EHPL) and 1204 to 1230 (SSSQ…ETQL). Over residues 1057–1072 (AGTGGSSQGRHTGGGD) the composition is skewed to gly residues. Positions 1204–1219 (SSSQSRKSSCSHKLSS) are enriched in low complexity.

Belongs to the potassium channel family. Calcium-activated (TC 1.A.1.3) subfamily. KCa4.1/KCNT1 sub-subfamily. Homotetramer; which constitutes the Na(+)-activated K(+) channel. Interacts with KCNT2; these heterodimer channels differ from the homomers in their unitary conductance, kinetic behavior, subcellular localization, and response to activation of protein kinase C. Interacts (via C-terminus) with FMR1; this interaction alters gating properties of KCNT1. Interacts with CRBN via its cytoplasmic C-terminus. In terms of processing, phosphorylated by protein kinase C. Phosphorylation of the C-terminal domain increases channel activity. Highest expression in liver, brain and spinal cord. Lowest expression in skeletal muscle.

It localises to the cell membrane. The catalysed reaction is K(+)(in) = K(+)(out). With respect to regulation, activated by high intracellular Na(+). In addition to activation by Na(+), is cooperatively activated by intracellular Cl(-) levels. Inhibited by Zn(2+). Activated upon stimulation of G-protein coupled receptors, such as CHRM1 and GRIA1. Sodium-activated K(+) channel. Acts as an important mediator of neuronal membrane excitability. Contributes to the delayed outward currents. Regulates neuronal bursting in sensory neurons. Contributes to synaptic development and plasticity. This chain is Potassium channel subfamily T member 1, found in Homo sapiens (Human).